We begin with the raw amino-acid sequence, 344 residues long: Uroporphyrinogen decarboxylase (344 aa).

Substrate is bound by residues 26–30, Phe-45, Asp-75, Tyr-151, Ser-206, and His-320; that span reads RQAGR.

Belongs to the uroporphyrinogen decarboxylase family. As to quaternary structure, homodimer.

It localises to the cytoplasm. It carries out the reaction uroporphyrinogen III + 4 H(+) = coproporphyrinogen III + 4 CO2. It functions in the pathway porphyrin-containing compound metabolism; protoporphyrin-IX biosynthesis; coproporphyrinogen-III from 5-aminolevulinate: step 4/4. Catalyzes the decarboxylation of four acetate groups of uroporphyrinogen-III to yield coproporphyrinogen-III. In Staphylococcus saprophyticus subsp. saprophyticus (strain ATCC 15305 / DSM 20229 / NCIMB 8711 / NCTC 7292 / S-41), this protein is Uroporphyrinogen decarboxylase.